We begin with the raw amino-acid sequence, 28 residues long: Conotoxin Cl1.2 (28 aa).

Contains 2 disulfide bonds. As to expression, expressed by the venom duct.

It localises to the secreted. The sequence is that of Conotoxin Cl1.2 from Californiconus californicus (California cone).